The primary structure comprises 341 residues: Chitin synthase 3 complex protein CSI2 (341 aa).

The span at S35–S70 shows a compositional bias: low complexity. Disordered regions lie at residues S35–K78, D272–T291, and N298–E341.

Functionally, appears to be a structural component of the chitin synthase 3 complex. The chain is Chitin synthase 3 complex protein CSI2 (CSI2) from Saccharomyces cerevisiae (strain ATCC 204508 / S288c) (Baker's yeast).